A 399-amino-acid chain; its full sequence is Zona occludens toxin (399 aa).

In terms of biological role, increases the permeability of the small intestine mucosa by affecting the structure of intercellular tight junctions (zonula occludens). In Vibrio cholerae serotype O1 (strain ATCC 39315 / El Tor Inaba N16961), this protein is Zona occludens toxin (zot).